The sequence spans 941 residues: 26S proteasome regulatory subunit RPN2 (941 aa).

PC repeat units follow at residues 363-396 (SATA…SSRF), 400-437 (GSLY…EDVD), 442-476 (GASL…TSGE), 477-511 (AAAF…GNIT), 513-546 (GLSM…LIRY), 547-582 (GGAF…DVRR), 583-615 (AAVT…AHDR), 617-651 (GAAF…FVRQ), 652-689 (AAMI…KHQE), and 695-731 (GACV…VGLA). Positions 808-854 (KARAKKTKKEKDTNEDDKKKKEKDLKKEETKKDDAKKESEAEEDFNK) are disordered. The segment covering 816–854 (KEKDTNEDDKKKKEKDLKKEETKKDDAKKESEAEEDFNK) has biased composition (basic and acidic residues).

The protein belongs to the proteasome subunit S1 family.

Acts as a regulatory subunit of the 26S proteasome which is involved in the ATP-dependent degradation of ubiquitinated proteins. This Candida glabrata (strain ATCC 2001 / BCRC 20586 / JCM 3761 / NBRC 0622 / NRRL Y-65 / CBS 138) (Yeast) protein is 26S proteasome regulatory subunit RPN2 (RPN2).